A 189-amino-acid polypeptide reads, in one-letter code: 5-hmdU DNA kinase (189 aa).

This sequence belongs to the thymidylate kinase family. 5-hmdU DNA kinase subfamily.

It catalyses the reaction 5-hydroxymethyl-dUMP in DNA + ATP = 5-phosphomethyl-dUMP in DNA + ADP + H(+). Functionally, phosphorylates 5-hydroxymethyluracil (5hmdU) into 5-phosphomethyl-2'-deoxyuridine (5- PmdU) on DNA as a step in the pathway leading to thymidine hypermodifications in the viral genome. The phosphate is added internally to the DNA polymer. As a final result of the pathway of hypermodification, 5-AcNmdU substitutes for a subset of thymidines in the viral DNA. These modifications probably prevent degradation of viral genome by the host restriction-modification antiviral defense system. The chain is 5-hmdU DNA kinase from Pseudomonas phage PaMx11.